The chain runs to 501 residues: Bifunctional purine biosynthesis protein PurH (501 aa).

In terms of domain architecture, MGS-like spans 1 to 144 (MKKRALISVF…KNFKDVVVLS (144 aa)).

This sequence belongs to the PurH family.

The catalysed reaction is (6R)-10-formyltetrahydrofolate + 5-amino-1-(5-phospho-beta-D-ribosyl)imidazole-4-carboxamide = 5-formamido-1-(5-phospho-D-ribosyl)imidazole-4-carboxamide + (6S)-5,6,7,8-tetrahydrofolate. It catalyses the reaction IMP + H2O = 5-formamido-1-(5-phospho-D-ribosyl)imidazole-4-carboxamide. The protein operates within purine metabolism; IMP biosynthesis via de novo pathway; 5-formamido-1-(5-phospho-D-ribosyl)imidazole-4-carboxamide from 5-amino-1-(5-phospho-D-ribosyl)imidazole-4-carboxamide (10-formyl THF route): step 1/1. Its pathway is purine metabolism; IMP biosynthesis via de novo pathway; IMP from 5-formamido-1-(5-phospho-D-ribosyl)imidazole-4-carboxamide: step 1/1. The chain is Bifunctional purine biosynthesis protein PurH from Clostridium perfringens (strain ATCC 13124 / DSM 756 / JCM 1290 / NCIMB 6125 / NCTC 8237 / Type A).